We begin with the raw amino-acid sequence, 128 residues long: Ribosome-binding factor A (128 aa).

Belongs to the RbfA family. In terms of assembly, monomer. Binds 30S ribosomal subunits, but not 50S ribosomal subunits or 70S ribosomes.

The protein resides in the cytoplasm. One of several proteins that assist in the late maturation steps of the functional core of the 30S ribosomal subunit. Associates with free 30S ribosomal subunits (but not with 30S subunits that are part of 70S ribosomes or polysomes). Required for efficient processing of 16S rRNA. May interact with the 5'-terminal helix region of 16S rRNA. This Herminiimonas arsenicoxydans protein is Ribosome-binding factor A.